We begin with the raw amino-acid sequence, 345 residues long: Phosphoribosylformylglycinamidine cyclo-ligase (345 aa).

Belongs to the AIR synthase family. As to quaternary structure, homodimer.

The protein resides in the cytoplasm. The enzyme catalyses 2-formamido-N(1)-(5-O-phospho-beta-D-ribosyl)acetamidine + ATP = 5-amino-1-(5-phospho-beta-D-ribosyl)imidazole + ADP + phosphate + H(+). It functions in the pathway purine metabolism; IMP biosynthesis via de novo pathway; 5-amino-1-(5-phospho-D-ribosyl)imidazole from N(2)-formyl-N(1)-(5-phospho-D-ribosyl)glycinamide: step 2/2. The sequence is that of Phosphoribosylformylglycinamidine cyclo-ligase from Escherichia coli O157:H7.